Here is a 714-residue protein sequence, read N- to C-terminus: Elongation factor G-like protein (714 aa).

The region spanning 21 to 289 is the tr-type G domain; the sequence is GGVRNVVLVG…VATRGFPSPM (269 aa). Positions 30 to 37 are G1; that stretch reads GPSGGGKT. 30–37 contacts GTP; the sequence is GPSGGGKT. The segment at 73-77 is G2; sequence QRSVG. Positions 94 to 97 are G3; sequence DTPG. Residues 94-98 and 148-151 each bind GTP; these read DTPGY and TKLD. The G4 stretch occupies residues 148–151; it reads TKLD. The interval 267 to 269 is G5; sequence CSS.

It belongs to the TRAFAC class translation factor GTPase superfamily. Classic translation factor GTPase family. EF-G/EF-2 subfamily.

This chain is Elongation factor G-like protein, found in Mycobacterium tuberculosis (strain ATCC 25618 / H37Rv).